The sequence spans 63 residues: Ct-IT2 (63 aa).

The LCN-type CS-alpha/beta domain occupies 1-63; the sequence is KDGYPMDSKG…VWDKATNKCG (63 aa). 4 disulfides stabilise this stretch: Cys-11–Cys-62, Cys-15–Cys-36, Cys-22–Cys-43, and Cys-26–Cys-45. Gly-63 carries the glycine amide modification.

As to expression, expressed by the venom gland.

It localises to the secreted. In terms of biological role, beta toxins bind voltage-independently at site-4 of sodium channels (Nav) and shift the voltage of activation toward more negative potentials thereby affecting sodium channel activation and promoting spontaneous and repetitive firing. Is highly active on insects, since it provokes paralysis and death when injected into crickets. The chain is Ct-IT2 from Centruroides tecomanus (Scorpion).